We begin with the raw amino-acid sequence, 174 residues long: Myelin basic protein (174 aa).

The interval 1-86 is disordered; sequence MASQKRSSFR…GRPGDDNPVV (86 aa). A2 carries the post-translational modification N-acetylalanine; in forms C1, C2 and C3. Q4 is modified (deamidated glutamine; in forms C1 and C2; partial). S8 carries the post-translational modification Phosphoserine; in forms C2 and C3. S19 carries the post-translational modification Phosphoserine; in form C2. The span at 22–35 shows a compositional bias: basic and acidic residues; the sequence is DHARHGSPRHRDSG. Position 25 is a citrulline; in forms C1, C2 and C3 (R25). S34 carries the phosphoserine; in forms C2 and C3 modification. A Citrulline; in form C3 modification is found at R42. Basic and acidic residues predominate over residues 45 to 61; that stretch reads GGDRHVPRRGFGKDIHA. Position 65 is a phosphoserine; in forms C2 and C3 (S65). Q72 carries the deamidated glutamine; in forms C1, C2 and C3; partial modification. S74 carries the phosphoserine; in form C2 modification. N91 carries the post-translational modification Deamidated asparagine; in forms C1, C2 and C3; partial. A Phosphothreonine; in forms C2 and C3 modification is found at T97. Deamidated glutamine; in forms C1, C2 and C3; partial is present on Q102. Deamidated glutamine; in form C1 is present on Q102. R106 is modified (omega-N-methylarginine; in forms C1, C2 and C3; alternate). R106 bears the Symmetric dimethylarginine; in forms C1, C2 and C3; alternate mark. Phosphoserine; in forms C2 and C3 is present on residues S114 and S142. The segment at 126 to 174 is disordered; the sequence is SGKFYEHKSAHKGHKGSYHEGQGTLSKIFKLGGSGSRPGSRSGSPVARR. Q147 is modified (deamidated glutamine; in forms C1, C2 and C3; partial). Low complexity predominate over residues 162-174; that stretch reads RPGSRSGSPVARR. Position 165 is a phosphoserine; in forms C2 and C3 (S165). R166 bears the Citrulline; in forms C2 and C3 mark. S169 is subject to Phosphoserine; in forms C2 and C3.

The protein belongs to the myelin basic protein family. Homodimer. Post-translationally, several charge isomers are produced as a result of optional post-translational modifications, such as phosphorylation of serine or threonine residues, deamidation of glutamine or asparagine residues, citrullination and methylation of arginine residues. Chicken MBP contains 4 charge components denoted as C1, C2, C3 and C8. C1 lacks any phosphorylation sites, whereas C2 and C3 contain respectively 10 and 8 phosphorylation sites and arginine residues modified to citrulline. All three charge components contain deamidated glutamines and asparagine, and a methylated arginine.

It is found in the myelin membrane. Is, with PLP, the most abundant protein component of the myelin membrane in the CNS. Has a role in both the formation and stabilization of this compact multilayer arrangement of bilayers. Each splice variant and charge isomer may have a specialized function in the assembly of an optimized, biochemically functional myelin membrane. The polypeptide is Myelin basic protein (MBP) (Gallus gallus (Chicken)).